A 136-amino-acid polypeptide reads, in one-letter code: Translation initiation factor 5A (136 aa).

At Lys-37 the chain carries Hypusine.

Belongs to the eIF-5A family.

It localises to the cytoplasm. Functions by promoting the formation of the first peptide bond. The chain is Translation initiation factor 5A (eIF5A) from Thermococcus gammatolerans (strain DSM 15229 / JCM 11827 / EJ3).